A 183-amino-acid chain; its full sequence is Ubiquitin-conjugating enzyme E2-21 kDa (183 aa).

Residues 17-179 (TCMSRIVKEY…VKYFLAERER (163 aa)) form the UBC core domain. The active-site Glycyl thioester intermediate is the cysteine 115.

The protein belongs to the ubiquitin-conjugating enzyme family.

Its subcellular location is the peroxisome. It catalyses the reaction S-ubiquitinyl-[E1 ubiquitin-activating enzyme]-L-cysteine + [E2 ubiquitin-conjugating enzyme]-L-cysteine = [E1 ubiquitin-activating enzyme]-L-cysteine + S-ubiquitinyl-[E2 ubiquitin-conjugating enzyme]-L-cysteine.. The protein operates within protein modification; protein ubiquitination. Its function is as follows. Catalyzes the covalent attachment of ubiquitin to other proteins. Essential for peroxisome biogenesis. Required for UBC4-independent ubiquitination of PEX5. The polypeptide is Ubiquitin-conjugating enzyme E2-21 kDa (PEX4) (Saccharomyces cerevisiae (strain ATCC 204508 / S288c) (Baker's yeast)).